The following is a 629-amino-acid chain: tRNA uridine 5-carboxymethylaminomethyl modification enzyme MnmG (629 aa).

Residues 14 to 19 (GAGHAG), Val-126, and Ser-181 each bind FAD. An NAD(+)-binding site is contributed by 273–287 (GPRYCPSIEDKVVRF). Residue Gln-370 coordinates FAD.

Belongs to the MnmG family. Homodimer. Heterotetramer of two MnmE and two MnmG subunits. Requires FAD as cofactor.

It localises to the cytoplasm. Functionally, NAD-binding protein involved in the addition of a carboxymethylaminomethyl (cmnm) group at the wobble position (U34) of certain tRNAs, forming tRNA-cmnm(5)s(2)U34. The polypeptide is tRNA uridine 5-carboxymethylaminomethyl modification enzyme MnmG (Bacillus mycoides (strain KBAB4) (Bacillus weihenstephanensis)).